Reading from the N-terminus, the 79-residue chain is Small ribosomal subunit protein bS18 (79 aa).

This sequence belongs to the bacterial ribosomal protein bS18 family. As to quaternary structure, part of the 30S ribosomal subunit. Forms a tight heterodimer with protein bS6.

Functionally, binds as a heterodimer with protein bS6 to the central domain of the 16S rRNA, where it helps stabilize the platform of the 30S subunit. The sequence is that of Small ribosomal subunit protein bS18 from Aster yellows witches'-broom phytoplasma (strain AYWB).